A 425-amino-acid polypeptide reads, in one-letter code: Histidine--tRNA ligase (425 aa).

Belongs to the class-II aminoacyl-tRNA synthetase family. As to quaternary structure, homodimer.

The protein resides in the cytoplasm. It catalyses the reaction tRNA(His) + L-histidine + ATP = L-histidyl-tRNA(His) + AMP + diphosphate + H(+). This Aeromonas salmonicida (strain A449) protein is Histidine--tRNA ligase.